A 124-amino-acid chain; its full sequence is Large ribosomal subunit protein bL17 (124 aa).

The protein belongs to the bacterial ribosomal protein bL17 family. Part of the 50S ribosomal subunit. Contacts protein L32.

The protein is Large ribosomal subunit protein bL17 of Borrelia turicatae (strain 91E135).